Reading from the N-terminus, the 265-residue chain is Capsule polysaccharide export inner-membrane protein BexB (265 aa).

A run of 6 helical transmembrane segments spans residues 37 to 57 (IGFF…VMMW), 64 to 84 (KFST…AMMW), 118 to 138 (LLEV…LVMI), 151 to 171 (LIAW…ICAI), 178 to 198 (FGKI…AFFF), and 235 to 255 (ESIG…LVMV). The 222-residue stretch at 37–258 (IGFFWLFVEP…LLGLVMVKNF (222 aa)) folds into the ABC transmembrane type-2 domain.

Belongs to the ABC-2 integral membrane protein family.

It localises to the cell inner membrane. Functionally, may form an ATP-driven capsule polysaccharide export apparatus, in association with the BexA, BexC and BexD proteins. This is Capsule polysaccharide export inner-membrane protein BexB (bexB) from Haemophilus influenzae.